The following is a 61-amino-acid chain: Conotoxin Tx-D021 (61 aa).

A signal peptide spans 1–22 (MRCLPVFVILLLLIASTPSVDA). The propeptide occupies 23–48 (RAKTRDDMSLASFHDDAKRILQILQD). C60 is modified (cysteine amide).

It belongs to the conotoxin T superfamily. Contains 2 disulfide bonds that can be either 'C1-C3, C2-C4' or 'C1-C4, C2-C3', since these disulfide connectivities have been observed for conotoxins with cysteine framework V (for examples, see AC P0DQQ7 and AC P81755). In terms of tissue distribution, expressed by the venom duct.

Its subcellular location is the secreted. This Conus textile (Cloth-of-gold cone) protein is Conotoxin Tx-D021.